A 243-amino-acid polypeptide reads, in one-letter code: Venom nerve growth factor 3 (243 aa).

Residues 1–18 (MSMLCYTLIIAFLIGIWA) form the signal peptide. A propeptide spanning residues 19–125 (APKSEDNVPL…ALNRNIRAKR (107 aa)) is cleaved from the precursor. Residues 47–66 (GLKTSRNTDQRHPAPKKAED) show a composition bias toward basic and acidic residues. Residues 47–67 (GLKTSRNTDQRHPAPKKAEDQ) form a disordered region. 3 cysteine pairs are disulfide-bonded: Cys-139/Cys-204, Cys-182/Cys-232, and Cys-192/Cys-234. N-linked (GlcNAc...) asparagine glycans are attached at residues Asn-148 and Asn-151.

It belongs to the NGF-beta family. In terms of assembly, homodimer; non-covalently linked. As to expression, expressed by the venom gland.

Its subcellular location is the secreted. Its function is as follows. Nerve growth factor is important for the development and maintenance of the sympathetic and sensory nervous systems. It stimulates division and differentiation of sympathetic and embryonic sensory neurons as well as basal forebrain cholinergic neurons in the brain. Its relevance in the snake venom is not clear. However, it has been shown to inhibit metalloproteinase-dependent proteolysis of platelet glycoprotein Ib alpha, suggesting a metalloproteinase inhibition to prevent metalloprotease autodigestion and/or protection against prey proteases. Binds a lipid between the two protein chains in the homodimer. The lipid-bound form promotes histamine relase from mouse mast cells, contrary to the lipid-free form. The sequence is that of Venom nerve growth factor 3 from Tropidechis carinatus (Australian rough-scaled snake).